Consider the following 176-residue polypeptide: Adenylyl-sulfate kinase (176 aa).

An ATP-binding site is contributed by 12–19; the sequence is GLSGAGKS. Serine 86 functions as the Phosphoserine intermediate in the catalytic mechanism.

This sequence belongs to the APS kinase family.

The enzyme catalyses adenosine 5'-phosphosulfate + ATP = 3'-phosphoadenylyl sulfate + ADP + H(+). The protein operates within sulfur metabolism; hydrogen sulfide biosynthesis; sulfite from sulfate: step 2/3. Functionally, catalyzes the synthesis of activated sulfate. The polypeptide is Adenylyl-sulfate kinase (Gloeothece citriformis (strain PCC 7424) (Cyanothece sp. (strain PCC 7424))).